The primary structure comprises 344 residues: MTDSLTIARPDDWHLHFRDGDLLAETVPATANVFGRAIVMPNLTPPVNTVAEAAEYRERILAQVPAGVNFEPLMVLYLTDSTPVQEVERAANSDFVHALKLYPAGATTNSDSGVTDPGKITHLYEAMEKHDVPLLVHGEVTDAEVDIFDRERVFIDRYLADIRDQFPALRIVFEHVTTAEGVNFVREANALTAATVTPQHLLMNRNDLLVGGVRPHNYCLPILKRRQHQEAIQKAVIEGNSRFFLGTDSAPHARTKKEAACGCAGCYSARAALPLYATFLEQHNALDKLEGFASHFGADFYRLPRHTDTVTLVRKPWAVPTVIDAAGEPVVPFFAGEQLPWSLG.

H14 and H16 together coordinate Zn(2+). Substrate contacts are provided by residues 16–18 (HFR) and N42. Zn(2+) is bound by residues K100, H137, and H175. An N6-carboxylysine modification is found at K100. H137 serves as a coordination point for substrate. L220 contributes to the substrate binding site. D248 serves as a coordination point for Zn(2+). Residue D248 is part of the active site. Substrate is bound by residues H252 and A264.

The protein belongs to the metallo-dependent hydrolases superfamily. DHOase family. Class II DHOase subfamily. Homodimer. Zn(2+) is required as a cofactor.

The catalysed reaction is (S)-dihydroorotate + H2O = N-carbamoyl-L-aspartate + H(+). Its pathway is pyrimidine metabolism; UMP biosynthesis via de novo pathway; (S)-dihydroorotate from bicarbonate: step 3/3. Catalyzes the reversible cyclization of carbamoyl aspartate to dihydroorotate. The polypeptide is Dihydroorotase (Alcanivorax borkumensis (strain ATCC 700651 / DSM 11573 / NCIMB 13689 / SK2)).